Consider the following 214-residue polypeptide: Endosomal/vacuolar adapter protein YPT35 (214 aa).

Residues 1–63 are disordered; that stretch reads MNDKISFLPP…ATITRTRPRR (63 aa). The short motif at 5–15 is the PxP element; sequence ISFLPPEPIQL. Over residues 16-31 the composition is skewed to acidic residues; sequence LDEDSTEPELDIDSQQ. Over residues 38 to 58 the composition is skewed to low complexity; the sequence is SASNSNDSTSHSNDCGATITR. 2 positions are modified to phosphoserine: Ser65 and Ser66. Residues 73–213 enclose the PX domain; that stretch reads FQKAHVSDCT…IQFLEPSKRV (141 aa).

This sequence belongs to the YPT35 family. Interacts with RBD2, YIF1, YIP1 and YIP4.

The protein localises to the endosome membrane. It localises to the vacuole membrane. Functionally, recruits the lipid transfer protein VPS13 to endosomal and vacuolar membranes. This is Endosomal/vacuolar adapter protein YPT35 (YPT35) from Saccharomyces cerevisiae (strain YJM789) (Baker's yeast).